The chain runs to 61 residues: Protein SspF (61 aa).

It belongs to the alpha/beta-type SASP family.

May play some important role in either sporulation or the dormant spore. In Bacillus subtilis (strain 168), this protein is Protein SspF (sspF).